The chain runs to 241 residues: B-cell receptor-associated protein 29 (241 aa).

The Lumenal portion of the chain corresponds to 1–6 (MTLQWA). A helical transmembrane segment spans residues 7–27 (AVATFLYAEIGLILIFCLPFI). Topologically, residues 28-43 (PPQRWQKIFSFNVWGK) are cytoplasmic. Residues 44 to 64 (IATFWNKAFLTIIILLIVLFL) traverse the membrane as a helical segment. The Lumenal portion of the chain corresponds to 65 to 103 (DAVREVRKYSSVHTIEKSSTSRPDAYEHTQMKLFRSQRN). A helical membrane pass occupies residues 104–124 (LYISGFSLFFWLVLRRLVTLI). Residues 125–241 (TQLAKELSNK…RLERGNKKRL (117 aa)) are Cytoplasmic-facing. Residues 166-233 (GKDEECVLEA…KEHSELQDRL (68 aa)) are a coiled coil. The tract at residues 198–223 (LSKAQNDVMEMKMQSERLSKEYDQLL) is disordered. Over residues 206-223 (MEMKMQSERLSKEYDQLL) the composition is skewed to basic and acidic residues. Residues 238 to 241 (KKRL) carry the Di-lysine motif motif.

The protein belongs to the BCAP29/BCAP31 family. Homodimer. Heterodimer with BCAP31. Binds CASP8 (isoform 9) as a complex containing BCAP31, BCAP29, BCL2 and/or BCL2L1. Interacts with VAMP3, VAMP1 and membrane IgD immunoglobulins. May interact with ACTG1 and non-muscle myosin II.

It is found in the endoplasmic reticulum membrane. May play a role in anterograde transport of membrane proteins from the endoplasmic reticulum to the Golgi. May be involved in CASP8-mediated apoptosis. This chain is B-cell receptor-associated protein 29 (BCAP29), found in Homo sapiens (Human).